Reading from the N-terminus, the 395-residue chain is Galactokinase (395 aa).

39–42 contributes to the substrate binding site; that stretch reads EHTD. ATP is bound by residues S73 and 127 to 133; that span reads GAGLSSS. Residues S133 and E165 each contribute to the Mg(2+) site. The Proton acceptor role is filled by D177. Y227 contributes to the substrate binding site.

This sequence belongs to the GHMP kinase family. GalK subfamily.

The protein localises to the cytoplasm. The enzyme catalyses alpha-D-galactose + ATP = alpha-D-galactose 1-phosphate + ADP + H(+). It functions in the pathway carbohydrate metabolism; galactose metabolism. Its function is as follows. Catalyzes the transfer of the gamma-phosphate of ATP to D-galactose to form alpha-D-galactose-1-phosphate (Gal-1-P). The polypeptide is Galactokinase (Halalkalibacterium halodurans (strain ATCC BAA-125 / DSM 18197 / FERM 7344 / JCM 9153 / C-125) (Bacillus halodurans)).